Consider the following 334-residue polypeptide: N-acetyl-gamma-glutamyl-phosphate reductase (334 aa).

C154 is an active-site residue.

Belongs to the NAGSA dehydrogenase family. Type 1 subfamily.

Its subcellular location is the cytoplasm. It catalyses the reaction N-acetyl-L-glutamate 5-semialdehyde + phosphate + NADP(+) = N-acetyl-L-glutamyl 5-phosphate + NADPH + H(+). It functions in the pathway amino-acid biosynthesis; L-arginine biosynthesis; N(2)-acetyl-L-ornithine from L-glutamate: step 3/4. Its function is as follows. Catalyzes the NADPH-dependent reduction of N-acetyl-5-glutamyl phosphate to yield N-acetyl-L-glutamate 5-semialdehyde. This Salmonella typhimurium (strain LT2 / SGSC1412 / ATCC 700720) protein is N-acetyl-gamma-glutamyl-phosphate reductase.